Consider the following 55-residue polypeptide: Cytochrome b-c1 complex subunit 9 (55 aa).

Residues 1 to 15 (MKVIYNTLFKRTSTY) are Mitochondrial matrix-facing. Residues 16–41 (AVAIIASAFFFERALDVTSVAIFEGI) form a helical membrane-spanning segment. Residues 42–55 (NKGKLWKDIKGKYE) lie on the Chloroplast intermembrane side of the membrane.

This sequence belongs to the UQCR10/QCR9 family. As to quaternary structure, component of the ubiquinol-cytochrome c oxidoreductase (cytochrome b-c1 complex, complex III, CIII), a multisubunit enzyme composed of 3 respiratory subunits cytochrome b, cytochrome c1 and Rieske protein, 2 core protein subunits, and additional low-molecular weight protein subunits. The complex exists as an obligatory dimer and forms supercomplexes (SCs) in the inner mitochondrial membrane with cytochrome c oxidase (complex IV, CIV).

It localises to the mitochondrion inner membrane. Functionally, component of the ubiquinol-cytochrome c oxidoreductase, a multisubunit transmembrane complex that is part of the mitochondrial electron transport chain which drives oxidative phosphorylation. The respiratory chain contains 3 multisubunit complexes succinate dehydrogenase (complex II, CII), ubiquinol-cytochrome c oxidoreductase (cytochrome b-c1 complex, complex III, CIII) and cytochrome c oxidase (complex IV, CIV), that cooperate to transfer electrons derived from NADH and succinate to molecular oxygen, creating an electrochemical gradient over the inner membrane that drives transmembrane transport and the ATP synthase. The cytochrome b-c1 complex catalyzes electron transfer from ubiquinol to cytochrome c, linking this redox reaction to translocation of protons across the mitochondrial inner membrane, with protons being carried across the membrane as hydrogens on the quinol. In the process called Q cycle, 2 protons are consumed from the matrix, 4 protons are released into the intermembrane space and 2 electrons are passed to cytochrome c. The sequence is that of Cytochrome b-c1 complex subunit 9 (ox) from Drosophila melanogaster (Fruit fly).